The chain runs to 284 residues: Asialoglycoprotein receptor 1 (284 aa).

The Cytoplasmic segment spans residues 1-39; the sequence is MTKDYQDFQHLDNENDHHQLQRGPPPAPRLLQRLCSGFR. Positions 5-8 match the Endocytosis signal motif; that stretch reads YQDF. C35 carries the S-palmitoyl cysteine lipid modification. Residues 40–60 traverse the membrane as a helical; Signal-anchor for type II membrane protein segment; that stretch reads LFLLSLGLSILLLVVVCVITS. Residues 58–122 adopt a coiled-coil conformation; the sequence is ITSQNSQLRE…EDLREDHSRL (65 aa). Topologically, residues 61 to 284 are extracellular; that stretch reads QNSQLREDLR…VCETELGKAN (224 aa). N75, N78, and N146 each carry an N-linked (GlcNAc...) asparagine glycan. Intrachain disulfides connect C153–C164, C181–C276, and C254–C268. The 118-residue stretch at 160–277 folds into the C-type lectin domain; that stretch reads YEGSCYWFSS…CRRPYRWVCE (118 aa). The Ca(2+) site is built by V190, E196, D215, Q239, D241, D242, E252, D253, N264, D265, and E277.

Interacts with LASS2. In terms of processing, phosphorylated on a cytoplasmic Ser residue. In terms of tissue distribution, expressed exclusively in hepatic parenchymal cells.

The protein localises to the membrane. Its function is as follows. Mediates the endocytosis of plasma glycoproteins to which the terminal sialic acid residue on their complex carbohydrate moieties has been removed. The receptor recognizes terminal galactose and N-acetylgalactosamine units. After ligand binding to the receptor, the resulting complex is internalized and transported to a sorting organelle, where receptor and ligand are disassociated. The receptor then returns to the cell membrane surface. The sequence is that of Asialoglycoprotein receptor 1 (Asgr1) from Rattus norvegicus (Rat).